Here is a 158-residue protein sequence, read N- to C-terminus: Large ribosomal subunit protein uL15 (158 aa).

The protein belongs to the universal ribosomal protein uL15 family. In terms of assembly, part of the 50S ribosomal subunit.

In terms of biological role, binds to the 23S rRNA. The protein is Large ribosomal subunit protein uL15 of Aeropyrum pernix (strain ATCC 700893 / DSM 11879 / JCM 9820 / NBRC 100138 / K1).